We begin with the raw amino-acid sequence, 217 residues long: ATP-dependent Clp protease proteolytic subunit (217 aa).

S120 functions as the Nucleophile in the catalytic mechanism. H145 is an active-site residue.

The protein belongs to the peptidase S14 family. As to quaternary structure, fourteen ClpP subunits assemble into 2 heptameric rings which stack back to back to give a disk-like structure with a central cavity, resembling the structure of eukaryotic proteasomes.

Its subcellular location is the cytoplasm. It carries out the reaction Hydrolysis of proteins to small peptides in the presence of ATP and magnesium. alpha-casein is the usual test substrate. In the absence of ATP, only oligopeptides shorter than five residues are hydrolyzed (such as succinyl-Leu-Tyr-|-NHMec, and Leu-Tyr-Leu-|-Tyr-Trp, in which cleavage of the -Tyr-|-Leu- and -Tyr-|-Trp bonds also occurs).. Its function is as follows. Cleaves peptides in various proteins in a process that requires ATP hydrolysis. Has a chymotrypsin-like activity. Plays a major role in the degradation of misfolded proteins. This is ATP-dependent Clp protease proteolytic subunit from Ralstonia nicotianae (strain ATCC BAA-1114 / GMI1000) (Ralstonia solanacearum).